Consider the following 490-residue polypeptide: Cobyric acid synthase (490 aa).

Residues 252–439 (RLKVVVPVLP…LHGLFESTAA (188 aa)) enclose the GATase cobBQ-type domain. Cysteine 333 (nucleophile) is an active-site residue. Residue histidine 431 is part of the active site.

This sequence belongs to the CobB/CobQ family. CobQ subfamily.

It participates in cofactor biosynthesis; adenosylcobalamin biosynthesis. Catalyzes amidations at positions B, D, E, and G on adenosylcobyrinic A,C-diamide. NH(2) groups are provided by glutamine, and one molecule of ATP is hydrogenolyzed for each amidation. The sequence is that of Cobyric acid synthase from Pseudomonas aeruginosa (strain ATCC 15692 / DSM 22644 / CIP 104116 / JCM 14847 / LMG 12228 / 1C / PRS 101 / PAO1).